The primary structure comprises 115 residues: UPF0127 protein PH1112 (115 aa).

The protein belongs to the UPF0127 family.

This Pyrococcus horikoshii (strain ATCC 700860 / DSM 12428 / JCM 9974 / NBRC 100139 / OT-3) protein is UPF0127 protein PH1112.